Here is a 118-residue protein sequence, read N- to C-terminus: Small ribosomal subunit protein uS13 (118 aa).

The tract at residues 92 to 118 (RKGLPVRGQRTKTNARTRKGPRKPIRK) is disordered.

This sequence belongs to the universal ribosomal protein uS13 family. As to quaternary structure, part of the 30S ribosomal subunit. Forms a loose heterodimer with protein S19. Forms two bridges to the 50S subunit in the 70S ribosome.

Located at the top of the head of the 30S subunit, it contacts several helices of the 16S rRNA. In the 70S ribosome it contacts the 23S rRNA (bridge B1a) and protein L5 of the 50S subunit (bridge B1b), connecting the 2 subunits; these bridges are implicated in subunit movement. Contacts the tRNAs in the A and P-sites. The chain is Small ribosomal subunit protein uS13 from Pseudomonas putida (strain W619).